The following is a 473-amino-acid chain: MDYFPIFCQLQHKACLLVGGGEIAERKARLLLDAGALVTVNACEFAPQFHHWADQGQLSLISGEFVPELLADKWLVIAATDQLSVNALVYQSANQQRIFCNVVDDPKRTSFIMPSIIDRSPIMIAVSSGGKAPVLARLLREKLEALLPQHLGQLAQLAGNLRQRVKQHFTVMTERRRFWEKLLTHDRLAQSLANNDHVQADQHVEQLFSAPLTDRGEVVLVGAGPGDAGLLTLKGLQQIQQADVVVYDRLVSDEVMNLVRRDAERIFVGKQSGHHCVPQEQINQILLQQAQSGKRVVRLKGGDPFIFGRGGEELEELAGYGIPFSVVPGITAASGCSAYSGIPLTHRDHAQSVRLVTGHAKKEGQLDWANLAAEKQTLVFYMGLSQAGEIQQQLIQHGMPATTQVALVENGTSRHQRVVSGELSQLALLSQQVSSPSLIIVGSVVSLREKLNWFSSRHHDDQPKVTECVAHVG.

Residues 1–204 (MDYFPIFCQL…NDHVQADQHV (204 aa)) form a precorrin-2 dehydrogenase /sirohydrochlorin ferrochelatase region. NAD(+) contacts are provided by residues 22–23 (EI) and 43–44 (CE). Ser128 is modified (phosphoserine). Residues 216 to 473 (GEVVLVGAGP…KVTECVAHVG (258 aa)) form a uroporphyrinogen-III C-methyltransferase region. An S-adenosyl-L-methionine-binding site is contributed by Pro225. Catalysis depends on Asp248, which acts as the Proton acceptor. Catalysis depends on Lys270, which acts as the Proton donor. S-adenosyl-L-methionine contacts are provided by residues 301 to 303 (GGD), Ile306, 331 to 332 (TA), Met382, and Gly411.

The protein in the N-terminal section; belongs to the precorrin-2 dehydrogenase / sirohydrochlorin ferrochelatase family. It in the C-terminal section; belongs to the precorrin methyltransferase family.

It carries out the reaction uroporphyrinogen III + 2 S-adenosyl-L-methionine = precorrin-2 + 2 S-adenosyl-L-homocysteine + H(+). The catalysed reaction is precorrin-2 + NAD(+) = sirohydrochlorin + NADH + 2 H(+). The enzyme catalyses siroheme + 2 H(+) = sirohydrochlorin + Fe(2+). It participates in cofactor biosynthesis; adenosylcobalamin biosynthesis; precorrin-2 from uroporphyrinogen III: step 1/1. Its pathway is cofactor biosynthesis; adenosylcobalamin biosynthesis; sirohydrochlorin from precorrin-2: step 1/1. The protein operates within porphyrin-containing compound metabolism; siroheme biosynthesis; precorrin-2 from uroporphyrinogen III: step 1/1. It functions in the pathway porphyrin-containing compound metabolism; siroheme biosynthesis; siroheme from sirohydrochlorin: step 1/1. It participates in porphyrin-containing compound metabolism; siroheme biosynthesis; sirohydrochlorin from precorrin-2: step 1/1. In terms of biological role, multifunctional enzyme that catalyzes the SAM-dependent methylations of uroporphyrinogen III at position C-2 and C-7 to form precorrin-2 via precorrin-1. Then it catalyzes the NAD-dependent ring dehydrogenation of precorrin-2 to yield sirohydrochlorin. Finally, it catalyzes the ferrochelation of sirohydrochlorin to yield siroheme. In Yersinia pestis (strain Pestoides F), this protein is Siroheme synthase 1.